Reading from the N-terminus, the 82-residue chain is Escargot/snail protein homolog (82 aa).

C2H2-type zinc fingers lie at residues 1–5, 18–40, 44–66, and 72–82; these read HQQFH, FSCK…IRTH, CKCP…IRTH, and FSCQHCQSAFV.

Belongs to the snail C2H2-type zinc-finger protein family.

The protein localises to the nucleus. The polypeptide is Escargot/snail protein homolog (Calliphora vicina (Blue blowfly)).